The chain runs to 192 residues: GTP-dependent dephospho-CoA kinase (192 aa).

Residues aspartate 49, valine 50, valine 51, aspartate 68, lysine 70, and glutamate 127 each contribute to the GTP site.

It belongs to the GTP-dependent DPCK family.

The enzyme catalyses 3'-dephospho-CoA + GTP = GDP + CoA + H(+). It functions in the pathway cofactor biosynthesis; coenzyme A biosynthesis. Its function is as follows. Catalyzes the GTP-dependent phosphorylation of the 3'-hydroxyl group of dephosphocoenzyme A to form coenzyme A (CoA). In Halorubrum lacusprofundi (strain ATCC 49239 / DSM 5036 / JCM 8891 / ACAM 34), this protein is GTP-dependent dephospho-CoA kinase.